The sequence spans 568 residues: Protein adenylyltransferase SelO, mitochondrial (568 aa).

Residues glycine 120, glycine 122, arginine 123, lysine 144, aspartate 156, glycine 157, arginine 208, and arginine 215 each coordinate ATP. The Proton acceptor role is filled by aspartate 287. Mg(2+)-binding residues include asparagine 288 and aspartate 297. ATP is bound at residue aspartate 297.

The protein belongs to the SELO family. The cofactor is Mg(2+). In terms of processing, forms probably one or more intrachain disulfide bridges.

The protein resides in the mitochondrion. It carries out the reaction L-tyrosyl-[protein] + ATP = O-(5'-adenylyl)-L-tyrosyl-[protein] + diphosphate. Functionally, catalyzes the transfer of adenosine 5'-monophosphate (AMP) to Tyr residues of target mitochondrial proteins (AMPylation). Involved in redox homeostasis by regulating the cellular response to oxidative stress. Regulates protein S-glutathionylation levels possibly by AMPylation of deglutathionylation enzymes such as glutaredoxins. In Schizosaccharomyces pombe (strain 972 / ATCC 24843) (Fission yeast), this protein is Protein adenylyltransferase SelO, mitochondrial.